The primary structure comprises 290 residues: MKSLKELSLRIKNIKSVQKITKIMQMVSAAKLLQSQKKLSNSKLHISKLHSIISSLALSADQELLARILNINNEDSFLVFIIASDRGLCGSFNSSVVKFSQEHINKLIANDKKVDIVFFGKKAFETGKNRFNSKNILKVENSKGITLKRVEALVSDIDLSKYNKVKVFYSKFYNTFMQKPILETIKPWSKDSLLIDNSVVSPLTDYSYEYEPQNIEFILKSLTQDYVTASLYSALLESAASENSARMVAMESANRNTKEMLNKLALLYNRSRQAAITTDLIEVIGGAESL.

This sequence belongs to the ATPase gamma chain family. As to quaternary structure, F-type ATPases have 2 components, CF(1) - the catalytic core - and CF(0) - the membrane proton channel. CF(1) has five subunits: alpha(3), beta(3), gamma(1), delta(1), epsilon(1). CF(0) has three main subunits: a, b and c.

Its subcellular location is the cell membrane. Produces ATP from ADP in the presence of a proton gradient across the membrane. The gamma chain is believed to be important in regulating ATPase activity and the flow of protons through the CF(0) complex. The protein is ATP synthase gamma chain of Wolbachia pipientis subsp. Culex pipiens (strain wPip).